Here is a 506-residue protein sequence, read N- to C-terminus: Kynureninase 1 (506 aa).

Pyridoxal 5'-phosphate-binding positions include leucine 141, threonine 142, 169 to 172, aspartate 254, histidine 257, and tyrosine 279; that span reads FPSD. Position 280 is an N6-(pyridoxal phosphate)lysine (lysine 280). Positions 303–319 are enriched in low complexity; sequence ETAPTTTPDGTNGNPKT. A disordered region spans residues 303-322; the sequence is ETAPTTTPDGTNGNPKTISD. Residues tryptophan 334 and asparagine 362 each contribute to the pyridoxal 5'-phosphate site.

The protein belongs to the kynureninase family. Homodimer. Pyridoxal 5'-phosphate is required as a cofactor.

The protein resides in the cytoplasm. The catalysed reaction is L-kynurenine + H2O = anthranilate + L-alanine + H(+). The enzyme catalyses 3-hydroxy-L-kynurenine + H2O = 3-hydroxyanthranilate + L-alanine + H(+). It participates in amino-acid degradation; L-kynurenine degradation; L-alanine and anthranilate from L-kynurenine: step 1/1. The protein operates within cofactor biosynthesis; NAD(+) biosynthesis; quinolinate from L-kynurenine: step 2/3. Its function is as follows. Catalyzes the cleavage of L-kynurenine (L-Kyn) and L-3-hydroxykynurenine (L-3OHKyn) into anthranilic acid (AA) and 3-hydroxyanthranilic acid (3-OHAA), respectively. This chain is Kynureninase 1, found in Phaeosphaeria nodorum (strain SN15 / ATCC MYA-4574 / FGSC 10173) (Glume blotch fungus).